The sequence spans 150 residues: Transcriptional repressor NrdR (150 aa).

Residues 3–34 (CPFCGQLDSKVVDSRPDKGGAAIRRRRECESC) fold into a zinc finger. An ATP-cone domain is found at 49–139 (PLVLKKDGRR…VYRSFKDVNE (91 aa)).

It belongs to the NrdR family. Zn(2+) serves as cofactor.

Functionally, negatively regulates transcription of bacterial ribonucleotide reductase nrd genes and operons by binding to NrdR-boxes. The chain is Transcriptional repressor NrdR from Geobacter sulfurreducens (strain ATCC 51573 / DSM 12127 / PCA).